A 119-amino-acid polypeptide reads, in one-letter code: Large ribosomal subunit protein bL12 (119 aa).

It belongs to the bacterial ribosomal protein bL12 family. Homodimer. Part of the ribosomal stalk of the 50S ribosomal subunit. Forms a multimeric L10(L12)X complex, where L10 forms an elongated spine to which 2 to 4 L12 dimers bind in a sequential fashion. Binds GTP-bound translation factors.

Functionally, forms part of the ribosomal stalk which helps the ribosome interact with GTP-bound translation factors. Is thus essential for accurate translation. The chain is Large ribosomal subunit protein bL12 from Bacillus cytotoxicus (strain DSM 22905 / CIP 110041 / 391-98 / NVH 391-98).